We begin with the raw amino-acid sequence, 419 residues long: Putative zinc metalloprotease spr0242 (419 aa).

Histidine 18 is a binding site for Zn(2+). The active site involves glutamate 19. Histidine 22 lines the Zn(2+) pocket. 3 consecutive transmembrane segments (helical) span residues 169 to 191 (LITNFAGPMNNFILGVVVFWVLI), 345 to 367 (ILYFLAMISINIGIFNLIPIPAL), and 388 to 410 (EIETYVTLAGVVIMVVLMIAVTW).

The protein belongs to the peptidase M50B family. Zn(2+) is required as a cofactor.

It localises to the cell membrane. This chain is Putative zinc metalloprotease spr0242, found in Streptococcus pneumoniae (strain ATCC BAA-255 / R6).